The chain runs to 234 residues: 7-cyano-7-deazaguanine synthase (234 aa).

Residue 7-17 participates in ATP binding; that stretch reads LSGGLDSAVCM. Zn(2+) is bound by residues Cys-197, Cys-208, Cys-211, and Cys-214.

Belongs to the QueC family. It depends on Zn(2+) as a cofactor.

The enzyme catalyses 7-carboxy-7-deazaguanine + NH4(+) + ATP = 7-cyano-7-deazaguanine + ADP + phosphate + H2O + H(+). It functions in the pathway purine metabolism; 7-cyano-7-deazaguanine biosynthesis. In terms of biological role, catalyzes the ATP-dependent conversion of 7-carboxy-7-deazaguanine (CDG) to 7-cyano-7-deazaguanine (preQ(0)). The polypeptide is 7-cyano-7-deazaguanine synthase (Methanococcus aeolicus (strain ATCC BAA-1280 / DSM 17508 / OCM 812 / Nankai-3)).